Consider the following 338-residue polypeptide: tRNA N6-adenosine threonylcarbamoyltransferase (338 aa).

Fe cation is bound by residues His111 and His115. Substrate is bound by residues 134–138 (LVSGG), Asp167, Gly180, and Asn272. Residue Asp300 coordinates Fe cation.

Belongs to the KAE1 / TsaD family. Fe(2+) is required as a cofactor.

It is found in the cytoplasm. The catalysed reaction is L-threonylcarbamoyladenylate + adenosine(37) in tRNA = N(6)-L-threonylcarbamoyladenosine(37) in tRNA + AMP + H(+). In terms of biological role, required for the formation of a threonylcarbamoyl group on adenosine at position 37 (t(6)A37) in tRNAs that read codons beginning with adenine. Is involved in the transfer of the threonylcarbamoyl moiety of threonylcarbamoyl-AMP (TC-AMP) to the N6 group of A37, together with TsaE and TsaB. TsaD likely plays a direct catalytic role in this reaction. This is tRNA N6-adenosine threonylcarbamoyltransferase from Shewanella baltica (strain OS223).